We begin with the raw amino-acid sequence, 419 residues long: Potassium/proton antiporter CemA (419 aa).

4 consecutive transmembrane segments (helical) span residues L196–F216, I297–A317, I344–I364, and F371–L391.

Belongs to the CemA family.

It localises to the plastid. The protein localises to the chloroplast inner membrane. The enzyme catalyses K(+)(in) + H(+)(out) = K(+)(out) + H(+)(in). Contributes to K(+)/H(+) antiport activity by supporting proton efflux to control proton extrusion and homeostasis in chloroplasts in a light-dependent manner to modulate photosynthesis. Prevents excessive induction of non-photochemical quenching (NPQ) under continuous-light conditions. Indirectly promotes efficient inorganic carbon uptake into chloroplasts. In Chara vulgaris (Common stonewort), this protein is Potassium/proton antiporter CemA.